The primary structure comprises 512 residues: GTPase Obg (512 aa).

One can recognise an Obg domain in the interval 2–159; it reads ATFVDTVTLH…GDVVLELKVV (158 aa). The OBG-type G domain occupies 160 to 336; it reads ADVALVGYPS…LSFALAELVE (177 aa). GTP contacts are provided by residues 166-173, 191-195, 212-215, 288-291, and 317-319; these read GYPSAGKS, FTTLH, DVPG, NKID, and STV. Ser-173 and Thr-193 together coordinate Mg(2+). The region spanning 355–439 is the OCT domain; sequence PRAVNEKPFT…GDGIVFDWEP (85 aa). The disordered stretch occupies residues 491–512; sequence GEAGLWADEDGTDEDASSDAKA. Over residues 497 to 512 the composition is skewed to acidic residues; that stretch reads ADEDGTDEDASSDAKA.

It belongs to the TRAFAC class OBG-HflX-like GTPase superfamily. OBG GTPase family. As to quaternary structure, monomer. It depends on Mg(2+) as a cofactor.

It localises to the cytoplasm. In terms of biological role, an essential GTPase which binds GTP, GDP and possibly (p)ppGpp with moderate affinity, with high nucleotide exchange rates and a fairly low GTP hydrolysis rate. Plays a role in control of the cell cycle, stress response, ribosome biogenesis and in those bacteria that undergo differentiation, in morphogenesis control. This chain is GTPase Obg, found in Clavibacter michiganensis subsp. michiganensis (strain NCPPB 382).